The primary structure comprises 356 residues: tRNA N6-adenosine threonylcarbamoyltransferase (356 aa).

Histidine 115 and histidine 119 together coordinate Fe cation. Substrate-binding positions include 138-142 (LVSGG), aspartate 171, glycine 184, and asparagine 283. Fe cation is bound at residue aspartate 311.

This sequence belongs to the KAE1 / TsaD family. The cofactor is Fe(2+).

Its subcellular location is the cytoplasm. It carries out the reaction L-threonylcarbamoyladenylate + adenosine(37) in tRNA = N(6)-L-threonylcarbamoyladenosine(37) in tRNA + AMP + H(+). Required for the formation of a threonylcarbamoyl group on adenosine at position 37 (t(6)A37) in tRNAs that read codons beginning with adenine. Is involved in the transfer of the threonylcarbamoyl moiety of threonylcarbamoyl-AMP (TC-AMP) to the N6 group of A37, together with TsaE and TsaB. TsaD likely plays a direct catalytic role in this reaction. In Prochlorococcus marinus (strain MIT 9303), this protein is tRNA N6-adenosine threonylcarbamoyltransferase.